The chain runs to 384 residues: Carbamoyl phosphate synthase small chain (384 aa).

The interval 1–192 (MMKRIPAILV…LTDNIRVHRV (192 aa)) is CPSase. Serine 51, glycine 244, and glycine 246 together coordinate L-glutamine. The Glutamine amidotransferase type-1 domain occupies 196 to 382 (KVIVIDFGVK…IEIMTKSKNK (187 aa)). Residue cysteine 272 is the Nucleophile of the active site. Residues methionine 273, glutamine 276, asparagine 312, glycine 314, and phenylalanine 315 each coordinate L-glutamine. Catalysis depends on residues histidine 355 and glutamate 357.

The protein belongs to the CarA family. In terms of assembly, composed of two chains; the small (or glutamine) chain promotes the hydrolysis of glutamine to ammonia, which is used by the large (or ammonia) chain to synthesize carbamoyl phosphate. Tetramer of heterodimers (alpha,beta)4.

It localises to the plastid. The protein localises to the chloroplast. It catalyses the reaction hydrogencarbonate + L-glutamine + 2 ATP + H2O = carbamoyl phosphate + L-glutamate + 2 ADP + phosphate + 2 H(+). It carries out the reaction L-glutamine + H2O = L-glutamate + NH4(+). It participates in amino-acid biosynthesis; L-arginine biosynthesis; carbamoyl phosphate from bicarbonate: step 1/1. It functions in the pathway pyrimidine metabolism; UMP biosynthesis via de novo pathway; (S)-dihydroorotate from bicarbonate: step 1/3. Small subunit of the glutamine-dependent carbamoyl phosphate synthetase (CPSase). CPSase catalyzes the formation of carbamoyl phosphate from the ammonia moiety of glutamine, carbonate, and phosphate donated by ATP, constituting the first step of 2 biosynthetic pathways, one leading to arginine and/or urea and the other to pyrimidine nucleotides. The small subunit (glutamine amidotransferase) binds and cleaves glutamine to supply the large subunit with the substrate ammonia. This chain is Carbamoyl phosphate synthase small chain, found in Pyropia yezoensis (Susabi-nori).